A 303-amino-acid polypeptide reads, in one-letter code: MIKQRTLKNIIRATGVGLHSGEKVYLTLKPAPVDTGIVFRRADLDPVVEIPARAANVGETTMSTTLVNGDVKVDTVEHLLSAMAGLGIDNAYVELSASEVPIMDGSAGPFVFLIQSAGLEEQDAAKKFIRILREVTVEDGDKRATFVPFEGFKVSFEIDFDHPVFRDRTQSASVDFSSTSFVKEVSRARTFGFMSDIEYLRKHNLALGGSVENAIVVDADGVLNEDGLRYEDEFVKHKILDAIGDLYLLGNSLIGEFKGFKSGHALNNQLLRKLIEQKDAWEVVTFEDASTAPISYMRPVAAV.

3 residues coordinate Zn(2+): H78, H237, and D241. H264 serves as the catalytic Proton donor.

Belongs to the LpxC family. Zn(2+) is required as a cofactor.

It carries out the reaction a UDP-3-O-[(3R)-3-hydroxyacyl]-N-acetyl-alpha-D-glucosamine + H2O = a UDP-3-O-[(3R)-3-hydroxyacyl]-alpha-D-glucosamine + acetate. The protein operates within glycolipid biosynthesis; lipid IV(A) biosynthesis; lipid IV(A) from (3R)-3-hydroxytetradecanoyl-[acyl-carrier-protein] and UDP-N-acetyl-alpha-D-glucosamine: step 2/6. In terms of biological role, catalyzes the hydrolysis of UDP-3-O-myristoyl-N-acetylglucosamine to form UDP-3-O-myristoylglucosamine and acetate, the committed step in lipid A biosynthesis. This is UDP-3-O-acyl-N-acetylglucosamine deacetylase from Pseudomonas fluorescens (strain Pf0-1).